The sequence spans 186 residues: Pyridoxal 5'-phosphate synthase subunit PdxT (186 aa).

47–49 (GES) contributes to the L-glutamine binding site. C79 acts as the Nucleophile in catalysis. Residues R106 and 134-135 (IR) contribute to the L-glutamine site. Residues H170 and E172 each act as charge relay system in the active site.

Belongs to the glutaminase PdxT/SNO family. In terms of assembly, in the presence of PdxS, forms a dodecamer of heterodimers. Only shows activity in the heterodimer.

The enzyme catalyses aldehydo-D-ribose 5-phosphate + D-glyceraldehyde 3-phosphate + L-glutamine = pyridoxal 5'-phosphate + L-glutamate + phosphate + 3 H2O + H(+). It catalyses the reaction L-glutamine + H2O = L-glutamate + NH4(+). The protein operates within cofactor biosynthesis; pyridoxal 5'-phosphate biosynthesis. In terms of biological role, catalyzes the hydrolysis of glutamine to glutamate and ammonia as part of the biosynthesis of pyridoxal 5'-phosphate. The resulting ammonia molecule is channeled to the active site of PdxS. The sequence is that of Pyridoxal 5'-phosphate synthase subunit PdxT from Methanothrix thermoacetophila (strain DSM 6194 / JCM 14653 / NBRC 101360 / PT) (Methanosaeta thermophila).